The following is a 355-amino-acid chain: Guanine nucleotide-binding protein G(z) subunit alpha (355 aa).

The segment covering 1-14 (MGCRQSSEEKEAAR) has biased composition (basic and acidic residues). The segment at 1–26 (MGCRQSSEEKEAARRSRRIDRHLRSE) is disordered. Residue Gly-2 is the site of N-myristoyl glycine attachment. The S-palmitoyl cysteine moiety is linked to residue Cys-3. A G-alpha domain is found at 32–355 (REIKLLLLGT…QNNLKYIGLC (324 aa)). Residues 35-48 (KLLLLGTSNSGKST) form a G1 motif region. GTP contacts are provided by residues 40–47 (GTSNSGKS), 176–182 (LRSRDMT), 201–205 (DVGGQ), 270–273 (NKKD), and Ala-327. Ser-47 lines the Mg(2+) pocket. Residues 174-182 (DILRSRDMT) form a G2 motif region. ADP-ribosylarginine; by cholera toxin is present on Arg-179. Thr-182 contacts Mg(2+). Residues 197–206 (FKMVDVGGQR) are G3 motif. The interval 266 to 273 (ILFLNKKD) is G4 motif. Residues 325–330 (TCATDT) form a G5 motif region.

Belongs to the G-alpha family. G(i/o/t/z) subfamily. G-proteins are composed of 3 units; alpha, beta and gamma. The alpha chain contains the guanine nucleotide binding site. Interacts with ADGRB2.

The protein resides in the membrane. Its function is as follows. Guanine nucleotide-binding proteins (G proteins) are involved as modulators or transducers in various transmembrane signaling systems. The sequence is that of Guanine nucleotide-binding protein G(z) subunit alpha (GNAZ) from Homo sapiens (Human).